The following is a 193-amino-acid chain: uncharacterized protein (193 aa).

The chain crosses the membrane as a helical span at residues 153 to 170; that stretch reads WRYWAVIALIAAVLIYLY.

The protein resides in the membrane. This is an uncharacterized protein from Invertebrate iridescent virus 6 (IIV-6).